The sequence spans 446 residues: tRNA-2-methylthio-N(6)-dimethylallyladenosine synthase (446 aa).

An MTTase N-terminal domain is found at 3–124 (KKLYIKTYGC…LPELISKVVR (122 aa)). [4Fe-4S] cluster is bound by residues C12, C48, C87, C162, C166, and C169. Residues 148-380 (YPQGASSFIS…QKELAAQQLA (233 aa)) enclose the Radical SAM core domain. The 64-residue stretch at 383-446 (ESCIGSTMKV…LNSLSGEIYR (64 aa)) folds into the TRAM domain.

Belongs to the methylthiotransferase family. MiaB subfamily. In terms of assembly, monomer. Requires [4Fe-4S] cluster as cofactor.

It localises to the cytoplasm. The enzyme catalyses N(6)-dimethylallyladenosine(37) in tRNA + (sulfur carrier)-SH + AH2 + 2 S-adenosyl-L-methionine = 2-methylsulfanyl-N(6)-dimethylallyladenosine(37) in tRNA + (sulfur carrier)-H + 5'-deoxyadenosine + L-methionine + A + S-adenosyl-L-homocysteine + 2 H(+). Catalyzes the methylthiolation of N6-(dimethylallyl)adenosine (i(6)A), leading to the formation of 2-methylthio-N6-(dimethylallyl)adenosine (ms(2)i(6)A) at position 37 in tRNAs that read codons beginning with uridine. This chain is tRNA-2-methylthio-N(6)-dimethylallyladenosine synthase, found in Rickettsia bellii (strain RML369-C).